A 474-amino-acid polypeptide reads, in one-letter code: 3-isopropylmalate dehydratase large subunit (474 aa).

3 residues coordinate [4Fe-4S] cluster: C352, C413, and C416.

It belongs to the aconitase/IPM isomerase family. LeuC type 1 subfamily. In terms of assembly, heterodimer of LeuC and LeuD. [4Fe-4S] cluster serves as cofactor.

It carries out the reaction (2R,3S)-3-isopropylmalate = (2S)-2-isopropylmalate. Its pathway is amino-acid biosynthesis; L-leucine biosynthesis; L-leucine from 3-methyl-2-oxobutanoate: step 2/4. Its function is as follows. Catalyzes the isomerization between 2-isopropylmalate and 3-isopropylmalate, via the formation of 2-isopropylmaleate. The chain is 3-isopropylmalate dehydratase large subunit from Pseudomonas syringae pv. syringae (strain B728a).